A 110-amino-acid chain; its full sequence is MKFVLLFGVLLVTLFSYSSAEMLDDFDQADEDELLSLIEKEEARKDCIPKHHECTNNKHGCCRGHLFKYKCQCTTVVTQSGEETERCFCGTPPRHKAAELVVGFGKKIFG.

The signal sequence occupies residues 1 to 20; sequence MKFVLLFGVLLVTLFSYSSA. Residues 21–44 constitute a propeptide that is removed on maturation; that stretch reads EMLDDFDQADEDELLSLIEKEEAR. 4 disulfides stabilise this stretch: Cys-47–Cys-62, Cys-54–Cys-71, Cys-61–Cys-89, and Cys-73–Cys-87.

Belongs to the neurotoxin 19 (CSTX) family. 03 subfamily. As to expression, expressed by the venom gland.

It localises to the secreted. This chain is U1-lycotoxin-Ls1jj, found in Lycosa singoriensis (Wolf spider).